Here is a 213-residue protein sequence, read N- to C-terminus: dTTP/UTP pyrophosphatase (213 aa).

Residue D92 is the Proton acceptor of the active site.

The protein belongs to the Maf family. YhdE subfamily. It depends on a divalent metal cation as a cofactor.

It localises to the cytoplasm. It carries out the reaction dTTP + H2O = dTMP + diphosphate + H(+). It catalyses the reaction UTP + H2O = UMP + diphosphate + H(+). In terms of biological role, nucleoside triphosphate pyrophosphatase that hydrolyzes dTTP and UTP. May have a dual role in cell division arrest and in preventing the incorporation of modified nucleotides into cellular nucleic acids. This Granulibacter bethesdensis (strain ATCC BAA-1260 / CGDNIH1) protein is dTTP/UTP pyrophosphatase.